The primary structure comprises 486 residues: Glutamyl-tRNA(Gln) amidotransferase subunit A (486 aa).

Residues K76 and S151 each act as charge relay system in the active site. S175 functions as the Acyl-ester intermediate in the catalytic mechanism.

The protein belongs to the amidase family. GatA subfamily. In terms of assembly, heterotrimer of A, B and C subunits.

It catalyses the reaction L-glutamyl-tRNA(Gln) + L-glutamine + ATP + H2O = L-glutaminyl-tRNA(Gln) + L-glutamate + ADP + phosphate + H(+). Functionally, allows the formation of correctly charged Gln-tRNA(Gln) through the transamidation of misacylated Glu-tRNA(Gln) in organisms which lack glutaminyl-tRNA synthetase. The reaction takes place in the presence of glutamine and ATP through an activated gamma-phospho-Glu-tRNA(Gln). This is Glutamyl-tRNA(Gln) amidotransferase subunit A from Chromohalobacter salexigens (strain ATCC BAA-138 / DSM 3043 / CIP 106854 / NCIMB 13768 / 1H11).